The sequence spans 76 residues: Protein CYSTEINE-RICH TRANSMEMBRANE MODULE 11 (76 aa).

Residues 19–45 are disordered; it reads GPPPPVGVPPQYYPPPPPPPPPPPPPR. The helical transmembrane segment at 47-63 threads the bilayer; that stretch reads VGFLEGLLAALCCCCLV.

It belongs to the CYSTM1 family. As to quaternary structure, heterodimers. Interacts with CYSTM6, CYSTM7 and WIH1/CYSTM13. As to expression, mostly expressed in stems, siliques, leaves and flowers and, to a lower extent, in roots.

The protein resides in the cell membrane. The protein localises to the cytoplasm. Involved in resistance to abiotic stress. This is Protein CYSTEINE-RICH TRANSMEMBRANE MODULE 11 from Arabidopsis thaliana (Mouse-ear cress).